A 147-amino-acid chain; its full sequence is Anti-sigma F factor (147 aa).

Belongs to the anti-sigma-factor family.

The enzyme catalyses L-seryl-[protein] + ATP = O-phospho-L-seryl-[protein] + ADP + H(+). The catalysed reaction is L-threonyl-[protein] + ATP = O-phospho-L-threonyl-[protein] + ADP + H(+). Its function is as follows. Binds to sigma F and blocks its ability to form an RNA polymerase holoenzyme (E-sigma F). Phosphorylates SpoIIAA on a serine residue. This phosphorylation may enable SpoIIAA to act as an anti-anti-sigma factor that counteracts SpoIIAB and thus releases sigma F from inhibition. The polypeptide is Anti-sigma F factor (Heyndrickxia coagulans (Weizmannia coagulans)).